We begin with the raw amino-acid sequence, 216 residues long: Kynurenine formamidase (216 aa).

Trp-24 lines the substrate pocket. 3 residues coordinate Zn(2+): His-54, His-58, and Asp-60. His-64 acts as the Proton donor/acceptor in catalysis. Residues His-164 and Glu-176 each coordinate Zn(2+).

This sequence belongs to the Cyclase 1 superfamily. KynB family. In terms of assembly, homodimer. Zn(2+) is required as a cofactor.

The catalysed reaction is N-formyl-L-kynurenine + H2O = L-kynurenine + formate + H(+). It participates in amino-acid degradation; L-tryptophan degradation via kynurenine pathway; L-kynurenine from L-tryptophan: step 2/2. Functionally, catalyzes the hydrolysis of N-formyl-L-kynurenine to L-kynurenine, the second step in the kynurenine pathway of tryptophan degradation. The sequence is that of Kynurenine formamidase from Erythrobacter litoralis (strain HTCC2594).